The following is a 54-amino-acid chain: Ovomucoid (54 aa).

One can recognise a Kazal-like domain in the interval 4–54 (VDCSDYPKPVCSLDYMPLCGSDNTTYNNKCIFCNAVVDSNGTITLSHFGKC). 3 disulfides stabilise this stretch: Cys-6–Cys-36, Cys-14–Cys-33, and Cys-22–Cys-54. Residue Asn-43 is glycosylated (N-linked (GlcNAc...) asparagine).

Its subcellular location is the secreted. The chain is Ovomucoid from Haemorhous mexicanus (House finch).